The chain runs to 395 residues: Torsin-3A (395 aa).

An N-terminal signal peptide occupies residues 1-24; sequence MFFGAFWLLLLLLLPPLRPPGAQG. N120 carries N-linked (GlcNAc...) asparagine glycosylation. 165 to 172 is a binding site for ATP; sequence GWSGTGKN.

Belongs to the ClpA/ClpB family. Torsin subfamily. In terms of assembly, may not form homohexamers. In terms of processing, N-glycosylated.

The protein resides in the cytoplasm. It is found in the endoplasmic reticulum lumen. The protein is Torsin-3A (Tor3a) of Rattus norvegicus (Rat).